The primary structure comprises 273 residues: Peptide deformylase 1B, chloroplastic/mitochondrial (273 aa).

Residues 1–56 (MAVCNCFLQAPPLSRILLPVLSRRATTLSAGYGRLKSTVTFCSTVNRTSPLTSSVR) constitute a chloroplast and mitochondrion transit peptide. C171 and H213 together coordinate Fe cation. The active site involves E214. H217 lines the Fe cation pocket. Residues 246–261 (YEEKTGLPSPERVEAR) show a composition bias toward basic and acidic residues. The segment at 246-273 (YEEKTGLPSPERVEARQKRKAGVGFGKR) is disordered. Positions 262–273 (QKRKAGVGFGKR) are enriched in basic residues.

It belongs to the polypeptide deformylase family. As to quaternary structure, homodimer. The cofactor is Fe(2+). In terms of tissue distribution, expressed in leaves and flowers.

The protein localises to the plastid. Its subcellular location is the chloroplast stroma. It is found in the mitochondrion. The enzyme catalyses N-terminal N-formyl-L-methionyl-[peptide] + H2O = N-terminal L-methionyl-[peptide] + formate. Inhibited by actinonin. Its function is as follows. Removes the formyl group from the N-terminal Met of newly synthesized proteins. Has a preferred substrate specificity towards the photosystem II (PS II) D1 polypeptide. The polypeptide is Peptide deformylase 1B, chloroplastic/mitochondrial (PDF1B) (Arabidopsis thaliana (Mouse-ear cress)).